Here is a 267-residue protein sequence, read N- to C-terminus: Coiled-coil domain-containing protein 90B, mitochondrial (267 aa).

The transit peptide at Met-1–Phe-47 directs the protein to the mitochondrion. The stretch at Leu-142–Ile-175 forms a coiled coil. Residues Thr-244–Trp-266 form a helical membrane-spanning segment.

The protein belongs to the CCDC90 family.

It is found in the mitochondrion membrane. This is Coiled-coil domain-containing protein 90B, mitochondrial (ccdc90b) from Xenopus tropicalis (Western clawed frog).